Reading from the N-terminus, the 1265-residue chain is Nestin (1265 aa).

Residues M1–E16 form a head region. The tract at residues E17 to L52 is coil 1A. Positions E17–I324 constitute an IF rod domain. The segment at K53–A64 is linker 1. The coil 1B stretch occupies residues Q65–M160. The tract at residues Q161–P183 is linker 12. Residues D184 to N203 are coil 2A. Residues Y204 to K206 form a linker 2 region. Residues Q207 to I324 form a coil 2B region. Residues D325–E1265 are tail. Positions P383–T402 are enriched in polar residues. 5 disordered regions span residues P383 to S521, F667 to E830, H863 to Q1073, A1093 to S1116, and I1232 to E1265. Basic and acidic residues predominate over residues E403–E418. Positions D422 to K441 are enriched in polar residues. A compositionally biased stretch (basic and acidic residues) spans A444–D459. Over residues L479 to T496 the composition is skewed to polar residues. Acidic residues-rich tracts occupy residues E508 to V520 and L730 to E739. Basic and acidic residues-rich tracts occupy residues Y784 to E796, E803 to T819, and H863 to D897. The segment covering F901–T910 has biased composition (polar residues). The segment covering E911–N935 has biased composition (basic and acidic residues). A compositionally biased stretch (low complexity) spans S943–L956. The span at P1015–V1043 shows a compositional bias: polar residues. A compositionally biased stretch (basic and acidic residues) spans S1061–K1070. 2 stretches are compositionally biased toward polar residues: residues S1105–S1116 and P1242–D1251. Acidic residues predominate over residues D1252–E1265.

It belongs to the intermediate filament family. Forms homodimers and homotetramers in vitro. In mixtures with other intermediate filament proteins such as vimentin and alpha-internexin, preferentially forms heterodimers. In terms of tissue distribution, widely expressed throughout the developing nervous system at 24 hours post-fertilization (hpf). As development progresses, expression becomes restricted to proliferative zones of the developing and postembryonic central nervous system. In the peripheral nervous system, expressed in the cranial ganglia. Also expressed in mesodermal muscle precursor cells and in cranial mesenchymal tissue.

Functionally, promotes the disassembly of phosphorylated vimentin intermediate filaments (IF) during mitosis and may play a role in the trafficking and distribution of IF proteins and other cellular factors to daughter cells during progenitor cell division. Required for survival, renewal and mitogen-stimulated proliferation of neural progenitor cells. Required for brain and eye development. The polypeptide is Nestin (nes) (Danio rerio (Zebrafish)).